The chain runs to 261 residues: Homeobox protein engrailed-2b (261 aa).

Composition is skewed to basic and acidic residues over residues 1 to 21, 53 to 72, and 100 to 116; these read MEEN…DESN, GRRK…RENR, and KKTD…RAET. Disordered stretches follow at residues 1 to 24, 53 to 125, and 152 to 176; these read MEEN…NRAI, GRRK…SSDS, and DRPS…KRPR. A DNA-binding region (homeobox) is located at residues 172-231; it reads DKRPRTAFTAEQLQRLKNEFQNNRYLTEQRRQALAQELGLNESQIKIWFQNKRAKIKKAT.

Belongs to the engrailed homeobox family.

The protein resides in the nucleus. In Danio rerio (Zebrafish), this protein is Homeobox protein engrailed-2b (eng2b).